The following is a 188-amino-acid chain: dCTP deaminase (188 aa).

Residues 111-116 (KSTYAR), 135-137 (TLE), Q156, Y170, and Q180 contribute to the dCTP site. Residue E137 is the Proton donor/acceptor of the active site.

This sequence belongs to the dCTP deaminase family. In terms of assembly, homotrimer.

It carries out the reaction dCTP + H2O + H(+) = dUTP + NH4(+). Its pathway is pyrimidine metabolism; dUMP biosynthesis; dUMP from dCTP (dUTP route): step 1/2. Functionally, catalyzes the deamination of dCTP to dUTP. This chain is dCTP deaminase, found in Pseudomonas fluorescens (strain Pf0-1).